The primary structure comprises 220 residues: Large ribosomal subunit protein uL1 (220 aa).

This sequence belongs to the universal ribosomal protein uL1 family. Part of the 50S ribosomal subunit.

In terms of biological role, binds directly to 23S rRNA. The L1 stalk is quite mobile in the ribosome, and is involved in E site tRNA release. Protein L1 is also a translational repressor protein, it controls the translation of the L11 operon by binding to its mRNA. In Ehrlichia canis (strain Jake), this protein is Large ribosomal subunit protein uL1.